The chain runs to 84 residues: Anaphase-promoting complex subunit 11 (84 aa).

The Zn(2+) site is built by Cys-23, Cys-26, Cys-34, Cys-37, Cys-44, Cys-51, His-53, His-56, His-58, Cys-59, Cys-73, and Cys-76. The segment at 34–77 (CPDCKVPGDDCPLVWGQCSHCFHMHCILKWLNAQQVQQHCPMCR) adopts an RING-type zinc-finger fold.

The protein belongs to the RING-box family. The mammalian APC/C is composed at least of 14 distinct subunits ANAPC1, ANAPC2, CDC27/APC3, ANAPC4, ANAPC5, CDC16/APC6, ANAPC7, CDC23/APC8, ANAPC10, ANAPC11, CDC26/APC12, ANAPC13, ANAPC15 and ANAPC16 that assemble into a complex of at least 19 chains with a combined molecular mass of around 1.2 MDa; APC/C interacts with FZR1 and FBXO5. Interacts with the cullin domain of ANAPC2. Interacts with UBE2D2. In terms of processing, auto-ubiquitinated.

It localises to the cytoplasm. It is found in the nucleus. It participates in protein modification; protein ubiquitination. Together with the cullin protein ANAPC2, constitutes the catalytic component of the anaphase promoting complex/cyclosome (APC/C), a cell cycle-regulated E3 ubiquitin ligase that controls progression through mitosis and the G1 phase of the cell cycle. The APC/C complex acts by mediating ubiquitination and subsequent degradation of target proteins: it mainly mediates the formation of 'Lys-11'-linked polyubiquitin chains and, to a lower extent, the formation of 'Lys-48'- and 'Lys-63'-linked polyubiquitin chains. The APC/C complex catalyzes assembly of branched 'Lys-11'-/'Lys-48'-linked branched ubiquitin chains on target proteins. May recruit the E2 ubiquitin-conjugating enzymes to the complex. The polypeptide is Anaphase-promoting complex subunit 11 (Anapc11) (Mus musculus (Mouse)).